We begin with the raw amino-acid sequence, 426 residues long: Pyrophosphate--fructose 6-phosphate 1-phosphotransferase 2 (426 aa).

Glycine 15 lines the diphosphate pocket. Aspartate 114 contributes to the Mg(2+) binding site. Residues 140-142, 186-188, glutamate 247, and 308-311 each bind substrate; these read TID, MGR, and YELR. The Proton acceptor role is filled by aspartate 142.

It belongs to the phosphofructokinase type A (PFKA) family. PPi-dependent PFK group II subfamily. Clade 'Short' sub-subfamily. Homotetramer. The cofactor is Mg(2+).

Its subcellular location is the cytoplasm. The enzyme catalyses beta-D-fructose 6-phosphate + diphosphate = beta-D-fructose 1,6-bisphosphate + phosphate + H(+). It participates in carbohydrate degradation; glycolysis; D-glyceraldehyde 3-phosphate and glycerone phosphate from D-glucose: step 3/4. Its activity is regulated as follows. Non-allosteric. Functionally, catalyzes the phosphorylation of D-fructose 6-phosphate, the first committing step of glycolysis. Uses inorganic phosphate (PPi) as phosphoryl donor instead of ATP like common ATP-dependent phosphofructokinases (ATP-PFKs), which renders the reaction reversible, and can thus function both in glycolysis and gluconeogenesis. Consistently, PPi-PFK can replace the enzymes of both the forward (ATP-PFK) and reverse (fructose-bisphosphatase (FBPase)) reactions. This chain is Pyrophosphate--fructose 6-phosphate 1-phosphotransferase 2 (pfk2), found in Trichomonas vaginalis (strain ATCC PRA-98 / G3).